A 325-amino-acid chain; its full sequence is DNA repair and recombination protein RadA (325 aa).

An ATP-binding site is contributed by 107-114 (GEFGSGKT).

Belongs to the eukaryotic RecA-like protein family.

In terms of biological role, involved in DNA repair and in homologous recombination. Binds and assemble on single-stranded DNA to form a nucleoprotein filament. Hydrolyzes ATP in a ssDNA-dependent manner and promotes DNA strand exchange between homologous DNA molecules. The polypeptide is DNA repair and recombination protein RadA (Methanosarcina barkeri (strain Fusaro / DSM 804)).